A 360-amino-acid polypeptide reads, in one-letter code: Alanine racemase (360 aa).

Lysine 36 functions as the Proton acceptor; specific for D-alanine in the catalytic mechanism. The residue at position 36 (lysine 36) is an N6-(pyridoxal phosphate)lysine. Arginine 132 serves as a coordination point for substrate. Catalysis depends on tyrosine 256, which acts as the Proton acceptor; specific for L-alanine. Methionine 304 is a substrate binding site.

Belongs to the alanine racemase family. Pyridoxal 5'-phosphate serves as cofactor.

The catalysed reaction is L-alanine = D-alanine. Its pathway is amino-acid biosynthesis; D-alanine biosynthesis; D-alanine from L-alanine: step 1/1. Functionally, catalyzes the interconversion of L-alanine and D-alanine. May also act on other amino acids. This Pasteurella multocida (strain Pm70) protein is Alanine racemase (alr).